A 227-amino-acid chain; its full sequence is MQAKIVALSAIAAVVNADLRLNTNGIPSDCNAICRPIRDLGNICTVNFIPGQTNNNSDQLQDELDAQCVCTNSSFDVKNLAAQCSSCMSQKVPSDQQRSLEGINSIMSQCGFQATSYASSATSSANTIIVLATRLTASSQLTTTIGGGATPAPTSERSRTSDQARTTTFLTSNGGGFPSIATSTIGGGRETGSPNAAAGVVAPGSNSVLGAAGLAVAGAFALGAFML.

2 N-linked (GlcNAc...) asparagine glycosylation sites follow: Asn55 and Asn72. Residues 143–162 (TTIGGGATPAPTSERSRTSD) form a disordered region.

It localises to the secreted. The protein resides in the cell wall. This Colletotrichum gloeosporioides (Anthracnose fungus) protein is Protein CAP22 (CAP22).